The following is a 227-amino-acid chain: MARGIFITATGTDIGKTYVTALIIKRLRETNINCGYYKAALSEAERRDGKLIAGDANYVYNIANIKGDPNDAVSYIFQQAVSPHLAAKLNNVEISMERIKKDFYSIKNKYDYITVEGSGGIVCPISTGKEKIMLDNIIKIFKLPAIVVADAGLGTINSTILTLQYMKEKNISVKMILLNNYNHEDIIHIENKGYLSDNLLIPVYTCNKNANNLEIPVEKLIEIYEEI.

13–18 is a binding site for ATP; sequence DIGKTY. Position 17 (threonine 17) interacts with Mg(2+). Lysine 38 is a catalytic residue. Serine 42 is a substrate binding site. ATP-binding positions include aspartate 55, 116 to 119, and 179 to 180; these read EGSG and NN. Mg(2+)-binding residues include aspartate 55 and glutamate 116.

Belongs to the dethiobiotin synthetase family. As to quaternary structure, homodimer. Requires Mg(2+) as cofactor.

It is found in the cytoplasm. The enzyme catalyses (7R,8S)-7,8-diammoniononanoate + CO2 + ATP = (4R,5S)-dethiobiotin + ADP + phosphate + 3 H(+). Its pathway is cofactor biosynthesis; biotin biosynthesis; biotin from 7,8-diaminononanoate: step 1/2. In terms of biological role, catalyzes a mechanistically unusual reaction, the ATP-dependent insertion of CO2 between the N7 and N8 nitrogen atoms of 7,8-diaminopelargonic acid (DAPA, also called 7,8-diammoniononanoate) to form a ureido ring. The chain is ATP-dependent dethiobiotin synthetase BioD from Clostridium botulinum (strain Kyoto / Type A2).